Reading from the N-terminus, the 127-residue chain is MSETKKQPGRLKNRSEFLAVQAGEKRRGSTFLVEVLDRRAPETEPRVGFTVTKRQGNAVERNRMRRRLKEAVRLSAGVAMKPGHDYVIVARRDVLDTAFPKLQSLLIERIEGTAKPKRSQETRSRKE.

It belongs to the RnpA family. As to quaternary structure, consists of a catalytic RNA component (M1 or rnpB) and a protein subunit.

The enzyme catalyses Endonucleolytic cleavage of RNA, removing 5'-extranucleotides from tRNA precursor.. Functionally, RNaseP catalyzes the removal of the 5'-leader sequence from pre-tRNA to produce the mature 5'-terminus. It can also cleave other RNA substrates such as 4.5S RNA. The protein component plays an auxiliary but essential role in vivo by binding to the 5'-leader sequence and broadening the substrate specificity of the ribozyme. This Agrobacterium fabrum (strain C58 / ATCC 33970) (Agrobacterium tumefaciens (strain C58)) protein is Ribonuclease P protein component.